We begin with the raw amino-acid sequence, 1422 residues long: Cardiac-enriched FHL2-interacting protein (1422 aa).

The interval 1-23 (MQGNKKCADGFSDTSSIGSVLDE) is disordered. Position 119 is a phosphothreonine (T119). Disordered stretches follow at residues 151–177 (RTEA…KFAH), 199–265 (AGVS…GRGK), 279–443 (SAFE…SSPF), 459–500 (LETS…KAPS), 516–718 (YSPL…SDSQ), 731–850 (FSTS…TNKH), 877–1127 (VSSE…HLER), 1142–1244 (TGAA…GWEP), and 1353–1422 (RQGS…EGVS). The segment covering 201–210 (VSSTHQSSHQ) has biased composition (polar residues). Basic and acidic residues-rich tracts occupy residues 284–298 (WDAH…KDIT) and 305–315 (KAPKHYEDMPL). Residue S327 is modified to Phosphoserine. Residues 342–351 (SPSGIQSTSG) show a composition bias toward polar residues. The span at 395 to 405 (GPHDASEDKKQ) shows a compositional bias: basic and acidic residues. A compositionally biased stretch (polar residues) spans 461–470 (TSDTQPVETS). The residue at position 472 (S472) is a Phosphoserine. 3 stretches are compositionally biased toward basic and acidic residues: residues 481–495 (QEKE…DSYK), 524–537 (GFDE…DGKQ), and 579–588 (PAMDSRESFA). Low complexity predominate over residues 590–606 (SHPTFSSPSASSKTHFS). 3 stretches are compositionally biased toward basic and acidic residues: residues 611 to 622 (AAERNSHEKEEA), 635 to 644 (WHPDSRENLP), and 653 to 675 (CNRD…EKRL). Residues 731–744 (FSTSSSDQSFASFE) are compositionally biased toward low complexity. The span at 790-801 (GVEEHRQKETQR) shows a compositional bias: basic and acidic residues. Phosphoserine is present on S815. The segment covering 828–839 (ADKDTALSHAKD) has biased composition (basic and acidic residues). Composition is skewed to polar residues over residues 907 to 926 (SESQ…STEQ) and 944 to 954 (QDETSQQTRKG). A compositionally biased stretch (basic and acidic residues) spans 975–991 (ADERLAHEKSRSADSGK). Over residues 1048 to 1067 (AATSPNPSSLGGSSTCSPAA) the composition is skewed to polar residues. Residues 1087–1099 (PPGPGPWASPGPS) show a composition bias toward pro residues. Over residues 1173–1184 (RRAKKLASKRRK) the composition is skewed to basic residues. The span at 1185 to 1202 (SDQMSEKHTEAWEGKSFT) shows a compositional bias: basic and acidic residues. Polar residues predominate over residues 1353–1366 (RQGSSHRPQSSQGA). Residues 1411–1422 (DDLEDFATEGVS) are compositionally biased toward acidic residues.

As to quaternary structure, interacts with FHL2.

It localises to the cytoplasm. The protein resides in the myofibril. The protein localises to the sarcomere. Its subcellular location is the z line. Functionally, plays an important role in cardiomyocyte hypertrophy via activation of the calcineurin/NFAT signaling pathway. This Rattus norvegicus (Rat) protein is Cardiac-enriched FHL2-interacting protein.